The following is a 307-amino-acid chain: Dihydroorotate dehydrogenase A (fumarate) (307 aa).

FMN-binding positions include serine 21 and 46 to 47 (KT). Substrate is bound by residues lysine 46, 70–74 (NSVGL), and asparagine 130. Asparagine 130 contacts FMN. Cysteine 133 functions as the Nucleophile in the catalytic mechanism. Residues lysine 168 and isoleucine 194 each contribute to the FMN site. 195-196 (NT) contacts substrate. Residues glycine 220, 246 to 247 (GG), and 268 to 269 (GS) contribute to the FMN site.

The protein belongs to the dihydroorotate dehydrogenase family. Type 1 subfamily. In terms of assembly, homodimer. FMN is required as a cofactor.

It localises to the cytoplasm. The catalysed reaction is (S)-dihydroorotate + fumarate = orotate + succinate. It functions in the pathway pyrimidine metabolism; UMP biosynthesis via de novo pathway. Catalyzes the conversion of dihydroorotate to orotate with fumarate as the electron acceptor. This is Dihydroorotate dehydrogenase A (fumarate) (pyrD) from Lactobacillus delbrueckii subsp. bulgaricus (strain ATCC 11842 / DSM 20081 / BCRC 10696 / JCM 1002 / NBRC 13953 / NCIMB 11778 / NCTC 12712 / WDCM 00102 / Lb 14).